The sequence spans 224 residues: GrpE protein homolog 2, mitochondrial (224 aa).

The N-terminal 31 residues, 1-31 (MAARSLWAVQRLQRLLASGAMSESRGWLHPF), are a transit peptide targeting the mitochondrion. N6-acetyllysine is present on K141.

This sequence belongs to the GrpE family. Probable component of the PAM complex at least composed of a mitochondrial HSP70 protein, GRPEL1 or GRPEL2, TIMM44, TIMM16/PAM16 and TIMM14/DNAJC19. As to expression, ubiquitous.

Its subcellular location is the mitochondrion matrix. Functionally, essential component of the PAM complex, a complex required for the translocation of transit peptide-containing proteins from the inner membrane into the mitochondrial matrix in an ATP-dependent manner. Seems to control the nucleotide-dependent binding of mitochondrial HSP70 to substrate proteins. Stimulates ATPase activity of mt-HSP70. May also serve to modulate the interconversion of oligomeric (inactive) and monomeric (active) forms of mt-HSP70. This chain is GrpE protein homolog 2, mitochondrial (Grpel2), found in Mus musculus (Mouse).